The following is a 267-amino-acid chain: Phosphate import ATP-binding protein PstB 2 (267 aa).

The 242-residue stretch at 21–262 (LATKDLHVYY…AQCQSTNDYV (242 aa)) folds into the ABC transporter domain. 53–60 (GPSGCGKS) serves as a coordination point for ATP.

It belongs to the ABC transporter superfamily. Phosphate importer (TC 3.A.1.7) family. As to quaternary structure, the complex is composed of two ATP-binding proteins (PstB), two transmembrane proteins (PstC and PstA) and a solute-binding protein (PstS).

It localises to the cell membrane. It carries out the reaction phosphate(out) + ATP + H2O = ADP + 2 phosphate(in) + H(+). In terms of biological role, part of the ABC transporter complex PstSACB involved in phosphate import. Responsible for energy coupling to the transport system. The sequence is that of Phosphate import ATP-binding protein PstB 2 from Streptococcus pyogenes serotype M18 (strain MGAS8232).